We begin with the raw amino-acid sequence, 858 residues long: Potassium transporter 7 (858 aa).

Acidic residues-rich tracts occupy residues 1 to 16 (MAEESSMEGSEKEEID) and 38 to 53 (QDDDDSEIGVDDDNDG). A disordered region spans residues 1–68 (MAEESSMEGS…LESDEDEIPE (68 aa)). Residues 1-104 (MAEESSMEGS…DYEDLTVGRK (104 aa)) lie on the Cytoplasmic side of the membrane. Residues 105-125 (VLLAFQTLGVVFGDVGTSPLY) form a helical membrane-spanning segment. The Extracellular segment spans residues 126 to 147 (TFSVMFSKSPVQEKEDVIGALS). Residues 148–168 (LVLYTLLLVPLIKYVLVVLWA) form a helical membrane-spanning segment. The Cytoplasmic portion of the chain corresponds to 169–232 (NDDGEGGTFA…KLENSLILKK (64 aa)). The helical transmembrane segment at 233–253 (ILLVLVLAGTSMVIADGVVTP) threads the bilayer. At 254 to 269 (AMSVMSAVGGLKVGVD) the chain is on the extracellular side. Residues 270–290 (VVEQDQVVMISVAFLVILFSL) form a helical membrane-spanning segment. Residues 291–297 (QKYGTSK) lie on the Cytoplasmic side of the membrane. A helical transmembrane segment spans residues 298 to 318 (MGLVVGPALLIWFCSLAGIGI). The Extracellular portion of the chain corresponds to 319-345 (YNLIKYDSSVYRAFNPVHIYYFFKRNS). The chain crosses the membrane as a helical span at residues 346-366 (INAWYALGGCILCATGSEALF). Residues 367-380 (ADLCYFSVRSVQLT) are Cytoplasmic-facing. The helical transmembrane segment at 381–401 (FVCLVLPCLMLGYMGQAAYLM) threads the bilayer. Topologically, residues 402-413 (ENHADASQAFFS) are extracellular. A helical membrane pass occupies residues 414–434 (SVPGSAFWPVLFIANIAALIA). The Cytoplasmic segment spans residues 435–470 (SRTMTTATFSCIKQSTALGCFPRLKIIHTSRKFMGQ). Residues 471–491 (IYIPVLNWFLLAVCLVVVCSI) form a helical membrane-spanning segment. Topologically, residues 492-496 (SSIDE) are extracellular. The helical transmembrane segment at 497 to 517 (IGNAYGMAELGVMMTTTILVT) threads the bilayer. A topological domain (cytoplasmic) is located at residue leucine 518. The helical transmembrane segment at 519–539 (IMLLIWQINIVIVIAFLVVFL) threads the bilayer. Topologically, residues 540-552 (GVELVFFSSVIAS) are extracellular. A helical membrane pass occupies residues 553-573 (VGDGSWIILVFAVIMFGIMYI). At 574–858 (WNYGSKLRYE…LMQVGMTYMV (285 aa)) the chain is on the cytoplasmic side. A disordered region spans residues 707 to 731 (QERSLESDGNDDSDSEEDFPGSRVV). The segment covering 714 to 725 (DGNDDSDSEEDF) has biased composition (acidic residues). 2 positions are modified to phosphoserine: serine 719 and serine 721.

The protein belongs to the HAK/KUP transporter (TC 2.A.72.3) family.

It is found in the cell membrane. In terms of biological role, probable potassium transporter. This Arabidopsis thaliana (Mouse-ear cress) protein is Potassium transporter 7 (POT7).